The chain runs to 124 residues: Membrane magnesium transporter 2 (124 aa).

Position 1 (Met-1) is a topological domain, cytoplasmic. Residues 2 to 22 (VAWLWKVLVGVGLSALAHAAF) form a helical membrane-spanning segment. The Lumenal portion of the chain corresponds to 23 to 44 (SAAQHRSHTRLAEMKYEPLPTD). The chain crosses the membrane as a helical span at residues 45 to 65 (IVLQTLLAFALTCYGVVHTAG). The Cytoplasmic portion of the chain corresponds to 66–124 (DFRDRDATSELKNVTFDTLRNRPSFYVFQHSGSSLLQPSDTTRSSNLNVPSSDDIRLKF).

This sequence belongs to the membrane magnesium transporter (TC 1.A.67) family.

The protein localises to the golgi apparatus membrane. The protein resides in the early endosome membrane. In terms of biological role, mediates Mg(2+) transport. The protein is Membrane magnesium transporter 2 of Rattus norvegicus (Rat).